Consider the following 603-residue polypeptide: MSCRSYRVSSGRRVGSFSSCSAMAPQHLNRFRSSSVSCRSGPGFRGLGGFGSRSVINFGSSSPRIAVGCSRPVRCGVGFGAGSGMAFGSGDGLGFRASSGVGLGFGAGGCPSYGFGGPGFGGPGFGGPGFGYRIGGIGGPSAPAITAVTVNQSLLTPLNLEIDPNAQRVKRDEKEQIKTLNNKFASFIDKVRFLEQQNKLLETKWSFLQEQKCARSNLEPLFDNYITNLRRQLDVLSSDQARLQAERNHLQDILEGFKKKYEEEVVFRANAENEFVALKKDVDAAFLNKSDLEANVDTLIQETEFLKALYHEEIEMLQSHISETSVIVKMDNSRDLNLDGIIAEVKAQYEEVARRSRADVESWYQTKYEEMRVTAGQHCDNLRSTRDEINELTRLIQRLKAEIEHTKAQCAKLEAAVAEAEQQGEAALNDAKCKLADLEGALQQAKQDMARQLREYQELMNVKLALDIEIVTYRRLLEGEEIRICEGVGPVNISVSSSRGGVLCGPELVSGSSLSHNGGVTFSTSSSIRATGGVLASSSLRAGGDLLSSGSRGGSVLVGDACAPSIPCALPTEGGFSSCSGGRGNRSSSVRFSSTTTSRRTRY.

Residues 1-173 (MSCRSYRVSS…PNAQRVKRDE (173 aa)) are head. The IF rod domain maps to 173-484 (EKEQIKTLNN…RLLEGEEIRI (312 aa)). A coil 1A region spans residues 174–208 (KEQIKTLNNKFASFIDKVRFLEQQNKLLETKWSFL). A linker 1 region spans residues 209–218 (QEQKCARSNL). The segment at 219-319 (EPLFDNYITN…YHEEIEMLQS (101 aa)) is coil 1B. The segment at 320-336 (HISETSVIVKMDNSRDL) is linker 12. A coil 2 region spans residues 337–480 (NLDGIIAEVK…VTYRRLLEGE (144 aa)). The tract at residues 481–603 (EIRICEGVGP…STTTSRRTRY (123 aa)) is tail. Positions 579–603 (CSGGRGNRSSSVRFSSTTTSRRTRY) are disordered.

This sequence belongs to the intermediate filament family. Heterotetramer of two type I and two type II keratins. In terms of tissue distribution, in skin, only expressed in the suprabasal cells of tail scale epidermis. Suprabasally expressed in stratified squamous epithelia and also in the posterior unit of the complex filiform papillae of tongue. Expressed in rare anatomical sites in which an orthokeratinized stratum corneum would be too soft and a hard keratinized structure would be too rigid to meet the functional requirement of the respective epithelia.

In Mus musculus (Mouse), this protein is Keratin, type II cuticular Hb4 (Krt84).